A 123-amino-acid chain; its full sequence is Large ribosomal subunit protein eL8 (123 aa).

The protein belongs to the eukaryotic ribosomal protein eL8 family. In terms of assembly, may be present in up to 3 copies per 70S ribosome. Part of the 50S ribosomal subunit, where it binds 23S rRNA at its canonical site near the L1 stalk, as well as a possible second 50S binding site near helix 25 and a possible third site on the beak of the 30S subunit. Component of box C/D small ribonucleoprotein (sRNP) particles that contain rpl7ae, FlpA and nop5, plus a guide RNA. These sRNP particles form homodimers, giving rise to an asymmetric holoenzyme. Probably part of the RNase P complex.

It is found in the cytoplasm. In terms of biological role, multifunctional RNA-binding protein that recognizes the K-turn motif in ribosomal RNA, the RNA component of RNase P, box H/ACA, box C/D and box C'/D' sRNAs. Component of the 70S ribosome. Component of a box C/D small ribonucleoprotein (sRNP) particle that is involved in pre-rRNA and tRNA processing. Utilizes the methyl donor S-adenosyl-L-methionine to catalyze the site-specific 2'-hydroxyl methylation of ribose moieties in rRNA and tRNA. Site specificity is provided by a guide RNA that base pairs with the substrate. Methylation occurs at a characteristic distance from the sequence involved in base pairing with the guide RNA. The polypeptide is Large ribosomal subunit protein eL8 (Pyrococcus furiosus (strain ATCC 43587 / DSM 3638 / JCM 8422 / Vc1)).